The primary structure comprises 1006 residues: MAEQESLEFGKADFVLMDTVSMPEFMANLRLRFEKGRIYTFIGEVVVSVNPYKVLNIYGRDTVEQYKGRELYERPPHLFAIADAAYKAMKRRSKDTCIMISGESGAGKTEASKYIMQYIAAITNPSQRAEIERVKNMLLKSNCVLEAFGNAKTNRNDNSSRFGKYMDINFDFKGDPIGGHINNYLLEKSRVIVQQPGERSFHSFYQLLQGGSEQMLHSLHLQKSLSSYNYIRVGAQLKSSINDAAEFKVVADAMKVIGFKPEEIQTVYKILAVILHLGNLKFIVDGDTPLIENGKVVSVIAELLSTKADMVEKALLYRTVATGRDIIDKQHTEQEASYGRDAFAKAIYERLFCWIVTRINDIIEVKNYDTTIHGKNTVIGVLDIYGFEIFDNNSFEQFCINYCNEKLQQLFIQLVLKQEQEEYQREGIPWKHIDYFNNQIIVDLVEQQHKGIIAILDDACMNVGKVTDGMFLEALNSKLGKHGHFSSRKTCASDKILEFDRDFRIRHYAGDVVYSAIGFIDKNKDTLFQDFKRLMYNSSNPVLKNMWPEGKLSITEVTKRPLTAATLFKNSMIALVDNLASKEPYYVRCIKPNDKKSPQIFDDERCRHQVEYLGLLENVRVRRAGFAFRQTYEKFLHRYKMISEFTWPNHDLPSDKEAVKKLIERCGFQDDVAYGKSKIFIRTPRTLFTLEELRAQMLVRVVLFLQKVWRGTLARMRYKRTKAALTIIRYYRRYKVKSYIHEVARRFHGVKNMRDYGKHVKWPTPPKVLRRFEEALQSIFNRWRASQLIKTIPASDLPQVRAKVAAMEMLKGQRADLGLQRAWEGNYLASKPDTPQTSGTFVPVANELKRKDKYMNVLFSCHVRKVNRFSKVEDRAIFVTDRHLYKMDPTKQYKVMKTIPLYNLTGLSVSNGKDQLVVFHTKDNKDLIVCLFSKQPTHESRIGELVGVLVNHFKSEKRHLQVNVTNPVQCSLHGKKCTVSVETRLNQPQPDFTKNRSGFILSVPGN.

Ala-2 is subject to N-acetylalanine. In terms of domain architecture, Myosin motor spans 9–695 (FGKADFVLMD…TLFTLEELRA (687 aa)). An ATP-binding site is contributed by 102 to 109 (GESGAGKT). Ser-200 carries the post-translational modification Phosphoserine. Tyr-536 carries the post-translational modification Phosphotyrosine. Residues 572–594 (MIALVDNLASKEPYYVRCIKPND) form an actin-binding region. 2 IQ domains span residues 699 to 719 (VRVVLFLQKVWRGTLARMRYK) and 721 to 741 (TKAALTIIRYYRRYKVKSYIH). Residues 812–1005 (GQRADLGLQR…RSGFILSVPG (194 aa)) enclose the TH1 domain.

Belongs to the TRAFAC class myosin-kinesin ATPase superfamily. Myosin family. In terms of assembly, interacts (via the two IQ motifs) with calmodulin. Binds an additional calmodulin chain via a third, C-terminal region. Interacts with F-actin. Detected in enterocytes at the intestinal brush border membrane. Detected at the tip of intestinal microvilli (at protein level).

It is found in the cytoplasm. The protein localises to the perikaryon. It localises to the cell projection. Its subcellular location is the dendrite. The protein resides in the early endosome. It is found in the cell cortex. The protein localises to the basolateral cell membrane. Functionally, unconventional myosin that functions as actin-based motor protein with ATPase activity. Plays a role in endosomal protein trafficking, and especially in the transfer of cargo proteins from early to recycling endosomes. Required for normal planar cell polarity in ciliated tracheal cells, for normal rotational polarity of cilia, and for coordinated, unidirectional ciliary movement in the trachea. Required for normal, polarized cilia organization in brain ependymal epithelial cells. In Mus musculus (Mouse), this protein is Unconventional myosin-Id.